We begin with the raw amino-acid sequence, 99 residues long: Defensin-A4 (99 aa).

Positions 1–21 are cleaved as a signal peptide; sequence MKTLCLLFAVLCLVTWTQARG. Positions 22–68 are excised as a propeptide; the sequence is AEVEENLTAQDGEVDIAGDNGDVQLTLNTDDFESFTLKTLTLGHPRV. Intrachain disulfides connect C73-C97, C75-C89, and C79-C96.

Belongs to the alpha-defensin family. As to expression, lowly expressed in spleen, and expressed at lower levels in kidney and lung.

The protein resides in the secreted. Functionally, has antimicrobial activity. The polypeptide is Defensin-A4 (Ornithorhynchus anatinus (Duckbill platypus)).